A 518-amino-acid polypeptide reads, in one-letter code: Retinal dehydrogenase 2 (518 aa).

The residue at position 168 (tyrosine 168) is a Phosphotyrosine. Residues isoleucine 184–tryptophan 186, lysine 210–glutamate 213, and serine 264–glutamate 266 contribute to the NAD(+) site. The active-site Proton acceptor is the glutamate 286. The Nucleophile role is filled by cysteine 320. At serine 351 the chain carries Phosphoserine. NAD(+) is bound by residues lysine 366 to lysine 370 and glutamate 417.

The protein belongs to the aldehyde dehydrogenase family. In terms of assembly, homotetramer. In terms of tissue distribution, found in testis and less abundantly in lung, brain, heart, liver and kidney.

The protein resides in the cytoplasm. The enzyme catalyses retinal + NAD(+) + H2O = retinoate + NADH + 2 H(+). It catalyses the reaction all-trans-retinal + NAD(+) + H2O = all-trans-retinoate + NADH + 2 H(+). It carries out the reaction all-trans-13,14-dihydroretinal + NAD(+) + H2O = all-trans-13,14-dihydroretinoate + NADH + 2 H(+). The protein operates within cofactor metabolism; retinol metabolism. Functionally, catalyzes the NAD-dependent oxidation of aldehyde substrates, such as all-trans-retinal and all-trans-13,14-dihydroretinal, to their corresponding carboxylic acids, all-trans-retinoate and all-trans-13,14-dihydroretinoate, respectively. Retinoate signaling is critical for the transcriptional control of many genes, for instance it is crucial for initiation of meiosis in both male and female. Recognizes retinal as substrate, both in its free form and when bound to cellular retinol-binding protein. Lacks activity with benzaldehyde, acetaldehyde and octanal. Displays complete lack of activity with citral. In Rattus norvegicus (Rat), this protein is Retinal dehydrogenase 2 (Aldh1a2).